The sequence spans 56 residues: Trypsin inhibitor 1 (56 aa).

The signal sequence occupies residues 1–25; the sequence is MATTMAKLITLVVLAILAFVEVSVS. Residues 26-39 constitute a propeptide that is removed on maturation; the sequence is GYKTSISTITIEDN. Residues 40–53 constitute a cross-link (cyclopeptide (Gly-Asp)); it reads GRCTKSIPPICFPD. Cys42 and Cys50 are disulfide-bonded. Positions 54-56 are excised as a propeptide; the sequence is GRP.

Post-translationally, this is a cyclic peptide.

Functionally, inhibits trypsin, cathepsin G, elastase, chymotrypsin and thrombin. Does not inhibit factor Xa. The chain is Trypsin inhibitor 1 from Helianthus annuus (Common sunflower).